The sequence spans 492 residues: ATP synthase subunit beta, chloroplastic (492 aa).

Glycine 170–threonine 177 is an ATP binding site.

The protein belongs to the ATPase alpha/beta chains family. In terms of assembly, F-type ATPases have 2 components, CF(1) - the catalytic core - and CF(0) - the membrane proton channel. CF(1) has five subunits: alpha(3), beta(3), gamma(1), delta(1), epsilon(1). CF(0) has four main subunits: a(1), b(1), b'(1) and c(9-12).

It is found in the plastid. The protein localises to the chloroplast thylakoid membrane. It catalyses the reaction ATP + H2O + 4 H(+)(in) = ADP + phosphate + 5 H(+)(out). Its function is as follows. Produces ATP from ADP in the presence of a proton gradient across the membrane. The catalytic sites are hosted primarily by the beta subunits. The protein is ATP synthase subunit beta, chloroplastic of Marchantia polymorpha (Common liverwort).